Consider the following 260-residue polypeptide: uncharacterized protein (260 aa).

The stretch at 1 to 38 (MNWTREIEQYKQVVASYKLKMKRMEMKISDISEEKRQS) forms a coiled coil.

This is an uncharacterized protein from Caenorhabditis elegans.